Reading from the N-terminus, the 199-residue chain is Recombination protein RecR (199 aa).

The C4-type zinc finger occupies 57–72; it reads CQSCRTYTEETLCPIC. Residues 81-176 form the Toprim domain; that stretch reads STICVVETPA…MISRIAHGVP (96 aa).

Belongs to the RecR family.

In terms of biological role, may play a role in DNA repair. It seems to be involved in an RecBC-independent recombinational process of DNA repair. It may act with RecF and RecO. The polypeptide is Recombination protein RecR (Shewanella baltica (strain OS155 / ATCC BAA-1091)).